The primary structure comprises 188 residues: Holliday junction branch migration complex subunit RuvA (188 aa).

The interval 1 to 62 (MIVGVRGVLV…EDAQLLYGFL (62 aa)) is domain I. Residues 63–135 (ELGEKKLFER…LSGFDTELII (73 aa)) form a domain II region. A flexible linker region spans residues 135-139 (ISASE). Residues 140–188 (PKSLAVAQASEALESLGFKKDKISKALGSCSAVDTAILVKEALKLLQTI) are domain III.

Belongs to the RuvA family. In terms of assembly, homotetramer. Forms an RuvA(8)-RuvB(12)-Holliday junction (HJ) complex. HJ DNA is sandwiched between 2 RuvA tetramers; dsDNA enters through RuvA and exits via RuvB. An RuvB hexamer assembles on each DNA strand where it exits the tetramer. Each RuvB hexamer is contacted by two RuvA subunits (via domain III) on 2 adjacent RuvB subunits; this complex drives branch migration. In the full resolvosome a probable DNA-RuvA(4)-RuvB(12)-RuvC(2) complex forms which resolves the HJ.

Its subcellular location is the cytoplasm. In terms of biological role, the RuvA-RuvB-RuvC complex processes Holliday junction (HJ) DNA during genetic recombination and DNA repair, while the RuvA-RuvB complex plays an important role in the rescue of blocked DNA replication forks via replication fork reversal (RFR). RuvA specifically binds to HJ cruciform DNA, conferring on it an open structure. The RuvB hexamer acts as an ATP-dependent pump, pulling dsDNA into and through the RuvAB complex. HJ branch migration allows RuvC to scan DNA until it finds its consensus sequence, where it cleaves and resolves the cruciform DNA. The protein is Holliday junction branch migration complex subunit RuvA of Sulfurimonas denitrificans (strain ATCC 33889 / DSM 1251) (Thiomicrospira denitrificans (strain ATCC 33889 / DSM 1251)).